Consider the following 412-residue polypeptide: Multifunctional CCA protein (412 aa).

ATP contacts are provided by glycine 8 and arginine 11. Residues glycine 8 and arginine 11 each contribute to the CTP site. The Mg(2+) site is built by aspartate 21 and aspartate 23. Residues arginine 91, arginine 137, and arginine 140 each coordinate ATP. CTP-binding residues include arginine 91, arginine 137, and arginine 140. Residues 228-329 (TGIHTLMTLS…VKLFDSIDAW (102 aa)) enclose the HD domain.

This sequence belongs to the tRNA nucleotidyltransferase/poly(A) polymerase family. Bacterial CCA-adding enzyme type 1 subfamily. As to quaternary structure, monomer. Can also form homodimers and oligomers. Mg(2+) is required as a cofactor. Ni(2+) serves as cofactor.

It carries out the reaction a tRNA precursor + 2 CTP + ATP = a tRNA with a 3' CCA end + 3 diphosphate. The catalysed reaction is a tRNA with a 3' CCA end + 2 CTP + ATP = a tRNA with a 3' CCACCA end + 3 diphosphate. Catalyzes the addition and repair of the essential 3'-terminal CCA sequence in tRNAs without using a nucleic acid template. Adds these three nucleotides in the order of C, C, and A to the tRNA nucleotide-73, using CTP and ATP as substrates and producing inorganic pyrophosphate. tRNA 3'-terminal CCA addition is required both for tRNA processing and repair. Also involved in tRNA surveillance by mediating tandem CCA addition to generate a CCACCA at the 3' terminus of unstable tRNAs. While stable tRNAs receive only 3'-terminal CCA, unstable tRNAs are marked with CCACCA and rapidly degraded. This Escherichia coli O81 (strain ED1a) protein is Multifunctional CCA protein.